A 262-amino-acid chain; its full sequence is Type III pantothenate kinase (262 aa).

Residue 6 to 13 (DVGNTNAV) coordinates ATP. Substrate contacts are provided by residues Y100 and 107–110 (GADR). The active-site Proton acceptor is D109. D129 provides a ligand contact to K(+). Residue T132 participates in ATP binding. T184 serves as a coordination point for substrate.

This sequence belongs to the type III pantothenate kinase family. Homodimer. Requires NH4(+) as cofactor. K(+) is required as a cofactor.

It localises to the cytoplasm. The catalysed reaction is (R)-pantothenate + ATP = (R)-4'-phosphopantothenate + ADP + H(+). It participates in cofactor biosynthesis; coenzyme A biosynthesis; CoA from (R)-pantothenate: step 1/5. Catalyzes the phosphorylation of pantothenate (Pan), the first step in CoA biosynthesis. In Bacillus cereus (strain B4264), this protein is Type III pantothenate kinase.